Consider the following 142-residue polypeptide: Large ribosomal subunit protein uL11 (142 aa).

Belongs to the universal ribosomal protein uL11 family. As to quaternary structure, part of the ribosomal stalk of the 50S ribosomal subunit. Interacts with L10 and the large rRNA to form the base of the stalk. L10 forms an elongated spine to which L12 dimers bind in a sequential fashion forming a multimeric L10(L12)X complex. Post-translationally, one or more lysine residues are methylated.

Forms part of the ribosomal stalk which helps the ribosome interact with GTP-bound translation factors. In Bradyrhizobium diazoefficiens (strain JCM 10833 / BCRC 13528 / IAM 13628 / NBRC 14792 / USDA 110), this protein is Large ribosomal subunit protein uL11.